The sequence spans 110 residues: Large ribosomal subunit protein uL22 (110 aa).

It belongs to the universal ribosomal protein uL22 family. Part of the 50S ribosomal subunit.

In terms of biological role, this protein binds specifically to 23S rRNA; its binding is stimulated by other ribosomal proteins, e.g. L4, L17, and L20. It is important during the early stages of 50S assembly. It makes multiple contacts with different domains of the 23S rRNA in the assembled 50S subunit and ribosome. Its function is as follows. The globular domain of the protein is located near the polypeptide exit tunnel on the outside of the subunit, while an extended beta-hairpin is found that lines the wall of the exit tunnel in the center of the 70S ribosome. The polypeptide is Large ribosomal subunit protein uL22 (Chromohalobacter salexigens (strain ATCC BAA-138 / DSM 3043 / CIP 106854 / NCIMB 13768 / 1H11)).